Reading from the N-terminus, the 251-residue chain is uncharacterized protein (251 aa).

Residues histidine 6, histidine 8, glutamate 90, histidine 130, histidine 154, and aspartate 202 each contribute to the a divalent metal cation site.

This sequence belongs to the metallo-dependent hydrolases superfamily. TatD-type hydrolase family. It depends on a divalent metal cation as a cofactor.

This is an uncharacterized protein from Haemophilus influenzae (strain ATCC 51907 / DSM 11121 / KW20 / Rd).